Reading from the N-terminus, the 256-residue chain is Undecaprenyl-diphosphatase (256 aa).

The next 7 membrane-spanning stretches (helical) occupy residues 39–59 (PTDA…AVLV), 77–97 (RTVI…YMLF), 101–121 (FTGG…TGLM), 135–155 (ISTK…LPGV), 176–196 (LMVS…LDCL), 206–226 (LPGA…MDVL), and 233–253 (VSFS…TALP).

It belongs to the UppP family.

The protein localises to the cell membrane. The enzyme catalyses di-trans,octa-cis-undecaprenyl diphosphate + H2O = di-trans,octa-cis-undecaprenyl phosphate + phosphate + H(+). In terms of biological role, catalyzes the dephosphorylation of undecaprenyl diphosphate (UPP). The chain is Undecaprenyl-diphosphatase from Methanothrix thermoacetophila (strain DSM 6194 / JCM 14653 / NBRC 101360 / PT) (Methanosaeta thermophila).